A 541-amino-acid polypeptide reads, in one-letter code: tRNA uridine(34) acetyltransferase (541 aa).

The radical S-adenosyl-L-methionine (rSAM) stretch occupies residues 76-336; the sequence is KPVRTISGVA…GEYKPYREEE (261 aa). Residues 79-350 form the Radical SAM core domain; that stretch reads RTISGVAVVA…ISYAKSIMPK (272 aa). [4Fe-4S] cluster contacts are provided by Cys96, Cys101, and Cys104. Acetyl-CoA-binding positions include Lys156, 467-470, 491-493, and Tyr524; these read QLHV and YGR. Residues 401–541 form the N-acetyltransferase domain; the sequence is VMYKKGIMPD…VGAYMGKYLE (141 aa).

It belongs to the ELP3 family. The cofactor is [4Fe-4S] cluster.

It catalyses the reaction uridine(34) in tRNA + acetyl-CoA + S-adenosyl-L-methionine + H2O = 5-(carboxymethyl)uridine(34) in tRNA + 5'-deoxyadenosine + L-methionine + CoA + 2 H(+). It participates in tRNA modification. Functionally, tRNA uridine(34) acetyltransferase, which mediates formation of carboxymethyluridine in the wobble base at position 34 in tRNAs. The proposed mechanism is the following: (i) recruits S-adenosyl-L-methionine and cleaves it to generate a 5'-deoxyadenosine radical (5'-dA) in the radical S-adenosyl-L-methionine (rSAM) region, (ii) hydrolyzes acetyl-CoA in the N-acetyltransferase domain and (iii) an acetyl radical is formed by the products of the two domains and (iv) is transferred onto the C5 position of uridine(34) in the bound tRNA molecule. Does not show protein lysine acetyltransferase activity. This chain is tRNA uridine(34) acetyltransferase, found in Methanocaldococcus jannaschii (strain ATCC 43067 / DSM 2661 / JAL-1 / JCM 10045 / NBRC 100440) (Methanococcus jannaschii).